The chain runs to 122 residues: Small ribosomal subunit protein uS13 (122 aa).

The segment at 97–122 is disordered; sequence PVRGQRTKTNARTRKGPARTVAGKKK.

The protein belongs to the universal ribosomal protein uS13 family. As to quaternary structure, part of the 30S ribosomal subunit. Forms a loose heterodimer with protein S19. Forms two bridges to the 50S subunit in the 70S ribosome.

Located at the top of the head of the 30S subunit, it contacts several helices of the 16S rRNA. In the 70S ribosome it contacts the 23S rRNA (bridge B1a) and protein L5 of the 50S subunit (bridge B1b), connecting the 2 subunits; these bridges are implicated in subunit movement. Contacts the tRNAs in the A and P-sites. The sequence is that of Small ribosomal subunit protein uS13 from Geobacter sulfurreducens (strain ATCC 51573 / DSM 12127 / PCA).